Consider the following 291-residue polypeptide: Probable 2-(5''-triphosphoribosyl)-3'-dephosphocoenzyme-A synthase (291 aa).

This sequence belongs to the CitG/MdcB family.

It carries out the reaction 3'-dephospho-CoA + ATP = 2'-(5''-triphospho-alpha-D-ribosyl)-3'-dephospho-CoA + adenine. Functionally, involved in the formation of 2-(5''-phosphoribosyl)-3'-dephosphocoenzyme-A, the prosthetic group of the acyl-carrier protein of the malonate decarboxylase. The polypeptide is Probable 2-(5''-triphosphoribosyl)-3'-dephosphocoenzyme-A synthase (Pseudomonas syringae pv. syringae (strain B728a)).